The sequence spans 527 residues: Probable T-complex protein 1 subunit beta (527 aa).

Belongs to the TCP-1 chaperonin family. In terms of assembly, heterooligomeric complex of about 850 to 900 kDa that forms two stacked rings, 12 to 16 nm in diameter.

The protein localises to the cytoplasm. Functionally, molecular chaperone; assists the folding of proteins upon ATP hydrolysis. Known to play a role, in vitro, in the folding of actin and tubulin. In Schizosaccharomyces pombe (strain 972 / ATCC 24843) (Fission yeast), this protein is Probable T-complex protein 1 subunit beta (cct2).